The chain runs to 118 residues: MSDLDEIRRRRMEQLKQQQLAAQQQQGASLEQMQQEEQARQQFENQKKNALRQILTPEARQRLANLRLTKAELVNAIEMQLIQMAQAKRLQIPVTDATLKQILRETTSNKREIHITRK.

A compositionally biased stretch (low complexity) spans 15–44 (LKQQQLAAQQQQGASLEQMQQEEQARQQFE). Residues 15-45 (LKQQQLAAQQQQGASLEQMQQEEQARQQFEN) are disordered.

The protein belongs to the PDCD5 family.

In Methanosphaera stadtmanae (strain ATCC 43021 / DSM 3091 / JCM 11832 / MCB-3), this protein is DNA-binding protein Msp_0595.